The chain runs to 527 residues: DNA damage-binding protein cmr1 (527 aa).

A disordered region spans residues 35–90 (AGLFPPKSARSSPGGLTKPKKKPAPKKVKKEDEDLVPRRMSSRLRGLAADSEVAKR). A compositionally biased stretch (basic residues) spans 52-62 (KPKKKPAPKKV). 7 WD repeats span residues 185–226 (LTPE…PISA), 249–289 (PHTR…SVEK), 296–336 (SDDI…RSAV), 341–381 (LSEK…HDEP), 388–427 (VSRLSVSHAAFNSAGQIATSSYDDTLKIYDFGSKGIAAWK), 450–493 (GRWV…LAQL), and 496–527 (DGITAVPAVAVFHRSTNWIAGGTASGKICLWM). The interval 284-303 (TTSVEKYAPESTSDDIPISG) is disordered.

The protein belongs to the WD repeat DDB2/WDR76 family.

Functionally, DNA-binding protein that binds to both single- and double-stranded DNA. Binds preferentially to UV-damaged DNA. May be involved in DNA-metabolic processes. The chain is DNA damage-binding protein cmr1 from Neosartorya fischeri (strain ATCC 1020 / DSM 3700 / CBS 544.65 / FGSC A1164 / JCM 1740 / NRRL 181 / WB 181) (Aspergillus fischerianus).